The sequence spans 578 residues: Translation initiation factor eIF2B subunit gamma (578 aa).

Ser-296 and Ser-300 each carry phosphoserine. Disordered stretches follow at residues 298–337 (QASFKDPFTGNQQQQNPPTTDDDEDRNHDDDDDYKPSATS) and 535–578 (DDSV…LFER). Thr-306 carries the phosphothreonine modification. Positions 544-578 (EIAEETDSDDRSDEDSDDSEYTDEYEYEDDGLFER) are enriched in acidic residues.

The protein belongs to the eIF-2B gamma/epsilon subunits family. In terms of assembly, component of the translation initiation factor 2B (eIF2B) complex which is a heterodecamer of two sets of five different subunits: alpha, beta, gamma, delta and epsilon. Subunits alpha, beta and delta comprise a regulatory subcomplex and subunits epsilon and gamma comprise a catalytic subcomplex. Within the complex, the hexameric regulatory complex resides at the center, with the two heterodimeric catalytic subcomplexes bound on opposite sides.

The protein resides in the cytoplasm. The protein localises to the cytosol. Functionally, acts as a component of the translation initiation factor 2B (eIF2B) complex, which catalyzes the exchange of GDP for GTP on the eukaryotic initiation factor 2 (eIF2) complex gamma subunit. Its guanine nucleotide exchange factor activity is repressed when bound to eIF2 complex phosphorylated on the alpha subunit, thereby limiting the amount of methionyl-initiator methionine tRNA available to the ribosome and consequently global translation is repressed. It activates the synthesis of GCN4 in yeast under amino acid starvation conditions by suppressing the inhibitory effects of multiple AUG codons present in the leader of GCN4 mRNA. It may promote either repression or activation of GCN4 expression depending on amino acid availability. GCD1 stabilizes the interaction between eIF2 and GCD6 and stimulates the catalytic activity in vitro. This chain is Translation initiation factor eIF2B subunit gamma (GCD1), found in Saccharomyces cerevisiae (strain ATCC 204508 / S288c) (Baker's yeast).